The chain runs to 122 residues: Piercer of microtubule wall 2 protein (122 aa).

Positions 1-23 (MARETDCDLDKKTSLTSDAEMRP) are enriched in basic and acidic residues. Disordered stretches follow at residues 1–26 (MARE…PEPP) and 99–122 (QNNS…QHTL). Positions 113-122 (IDSPNYQHTL) are enriched in polar residues.

It belongs to the PIERCE2 family. As to quaternary structure, microtubule inner protein component of sperm flagellar doublet microtubules. Interacts with CFAP53, ODAD1 and ODAD3; the interactions link the outer dynein arms docking complex (ODA-DC) to the internal microtubule inner proteins (MIP) in cilium axoneme.

It is found in the cytoplasm. The protein localises to the cytoskeleton. It localises to the cilium axoneme. The protein resides in the flagellum axoneme. In terms of biological role, microtubule inner protein involved in the attachment of outer dynein arms (ODAs) to dynein-decorated doublet microtubules (DMTs) in cilia axoneme, which is required for motile cilia beating. The polypeptide is Piercer of microtubule wall 2 protein (Mus musculus (Mouse)).